The chain runs to 104 residues: Large ribosomal subunit protein uL24 (104 aa).

Belongs to the universal ribosomal protein uL24 family. As to quaternary structure, part of the 50S ribosomal subunit.

In terms of biological role, one of two assembly initiator proteins, it binds directly to the 5'-end of the 23S rRNA, where it nucleates assembly of the 50S subunit. Its function is as follows. One of the proteins that surrounds the polypeptide exit tunnel on the outside of the subunit. The chain is Large ribosomal subunit protein uL24 from Alteromonas mediterranea (strain DSM 17117 / CIP 110805 / LMG 28347 / Deep ecotype).